A 127-amino-acid polypeptide reads, in one-letter code: Aspartate 1-decarboxylase (127 aa).

Serine 25 (schiff-base intermediate with substrate; via pyruvic acid) is an active-site residue. Serine 25 carries the pyruvic acid (Ser) modification. Threonine 57 serves as a coordination point for substrate. Tyrosine 58 functions as the Proton donor in the catalytic mechanism. Residue 73–75 (GSA) participates in substrate binding.

It belongs to the PanD family. In terms of assembly, heterooctamer of four alpha and four beta subunits. Pyruvate serves as cofactor. Is synthesized initially as an inactive proenzyme, which is activated by self-cleavage at a specific serine bond to produce a beta-subunit with a hydroxyl group at its C-terminus and an alpha-subunit with a pyruvoyl group at its N-terminus.

It localises to the cytoplasm. It catalyses the reaction L-aspartate + H(+) = beta-alanine + CO2. Its pathway is cofactor biosynthesis; (R)-pantothenate biosynthesis; beta-alanine from L-aspartate: step 1/1. In terms of biological role, catalyzes the pyruvoyl-dependent decarboxylation of aspartate to produce beta-alanine. This is Aspartate 1-decarboxylase from Laribacter hongkongensis (strain HLHK9).